A 326-amino-acid chain; its full sequence is Holliday junction branch migration complex subunit RuvB (326 aa).

Positions 1–180 are large ATPase domain (RuvB-L); sequence MKSISCGKEY…FGIPLHLEFY (180 aa). ATP is bound by residues isoleucine 19, arginine 20, glycine 61, lysine 64, threonine 65, threonine 66, 127–129, arginine 170, tyrosine 180, and arginine 217; that span reads EDF. Threonine 65 lines the Mg(2+) pocket. Residues 181-251 form a small ATPAse domain (RuvB-S) region; that stretch reads SFEELVNIIK…VADSVLLKLG (71 aa). Residues 254–326 are head domain (RuvB-H); it reads KMGLNKLDMN…QAKEYLSFQH (73 aa). DNA contacts are provided by arginine 307 and arginine 312.

Belongs to the RuvB family. In terms of assembly, homohexamer. Forms an RuvA(8)-RuvB(12)-Holliday junction (HJ) complex. HJ DNA is sandwiched between 2 RuvA tetramers; dsDNA enters through RuvA and exits via RuvB. An RuvB hexamer assembles on each DNA strand where it exits the tetramer. Each RuvB hexamer is contacted by two RuvA subunits (via domain III) on 2 adjacent RuvB subunits; this complex drives branch migration. In the full resolvosome a probable DNA-RuvA(4)-RuvB(12)-RuvC(2) complex forms which resolves the HJ.

It localises to the cytoplasm. The catalysed reaction is ATP + H2O = ADP + phosphate + H(+). The RuvA-RuvB-RuvC complex processes Holliday junction (HJ) DNA during genetic recombination and DNA repair, while the RuvA-RuvB complex plays an important role in the rescue of blocked DNA replication forks via replication fork reversal (RFR). RuvA specifically binds to HJ cruciform DNA, conferring on it an open structure. The RuvB hexamer acts as an ATP-dependent pump, pulling dsDNA into and through the RuvAB complex. RuvB forms 2 homohexamers on either side of HJ DNA bound by 1 or 2 RuvA tetramers; 4 subunits per hexamer contact DNA at a time. Coordinated motions by a converter formed by DNA-disengaged RuvB subunits stimulates ATP hydrolysis and nucleotide exchange. Immobilization of the converter enables RuvB to convert the ATP-contained energy into a lever motion, pulling 2 nucleotides of DNA out of the RuvA tetramer per ATP hydrolyzed, thus driving DNA branch migration. The RuvB motors rotate together with the DNA substrate, which together with the progressing nucleotide cycle form the mechanistic basis for DNA recombination by continuous HJ branch migration. Branch migration allows RuvC to scan DNA until it finds its consensus sequence, where it cleaves and resolves cruciform DNA. In Wolbachia pipientis wMel, this protein is Holliday junction branch migration complex subunit RuvB.